A 131-amino-acid polypeptide reads, in one-letter code: Large ribosomal subunit protein bL12 (131 aa).

It belongs to the bacterial ribosomal protein bL12 family. As to quaternary structure, homodimer. Part of the ribosomal stalk of the 50S ribosomal subunit. Forms a multimeric L10(L12)X complex, where L10 forms an elongated spine to which 2 to 4 L12 dimers bind in a sequential fashion. Binds GTP-bound translation factors.

In terms of biological role, forms part of the ribosomal stalk which helps the ribosome interact with GTP-bound translation factors. Is thus essential for accurate translation. This Parasynechococcus marenigrum (strain WH8102) protein is Large ribosomal subunit protein bL12.